The primary structure comprises 272 residues: Short-chain dehydrogenase srdC (272 aa).

Residues isoleucine 15, aspartate 65, arginine 127, tyrosine 173, lysine 177, valine 206, and threonine 208 each contribute to the NADP(+) site. Tyrosine 173 serves as the catalytic Proton donor. The active-site Lowers pKa of active site Tyr is the lysine 177.

Belongs to the short-chain dehydrogenases/reductases (SDR) family.

Its function is as follows. Short-chain dehydrogenase; part of the gene cluster that mediates the biosynthesis of sordarial, a salicylic aldehyde structurally related to the phytotoxin pyriculol. The most interesting aspect of this pathway is formation of an aromatic product from the highly reducing polyketide synthase srdA. SrdA synthesizes a reduced polyketide chain from one molecule of acetyl-CoA and five molecules of malonyl-CoA. The polyketide chain is then reductively released as an aldehyde. The oxidoreductases srdC, srdD and srdE then oxidize one of the hydroxy groups to facilitate the intramolecular aldol condensation, followed by dehydration to yield a salicylic aldehyde. This aldehyde can undergo facile reduction by endogenous reductases to yield the alcohol 1-hydroxy-2-hydroxymethyl-3-pent-1,3-dienylbenzene. The flavin-dependent srdI counteract against the propensity of the aldehydes to be reduced under physiological conditions and is responsible for reoxidizing 1-hydroxy-2-hydroxymethyl-3-pent-1,3-dienylbenzene back to the salicylic aldehyde. This salicylic aldehyde is then selectively epoxidized by the cupin-domain-containing oxidoreductase srdB to yield the epoxide, which can be hydrolyzed stereoselectively by the hydrolase srdG to give the final product sordarial. The polypeptide is Short-chain dehydrogenase srdC (Neurospora crassa (strain ATCC 24698 / 74-OR23-1A / CBS 708.71 / DSM 1257 / FGSC 987)).